Here is a 61-residue protein sequence, read N- to C-terminus: MRWSKWFNVFCIVALGSIYGYKLFTNQEVSTTRLIIASVIVLWNIVGLFSKESVKQAQQAN.

2 helical membrane passes run 7–24 and 29–48; these read FNVF…YKLF and VSTT…IVGL.

The protein resides in the cell membrane. This is an uncharacterized protein from Bacillus subtilis (strain 168).